Reading from the N-terminus, the 488-residue chain is Ribulose bisphosphate carboxylase large chain (488 aa).

Asn127 and Thr177 together coordinate substrate. Lys179 serves as the catalytic Proton acceptor. Residue Lys181 coordinates substrate. Lys205, Asp207, and Glu208 together coordinate Mg(2+). Lys205 is modified (N6-carboxylysine). His297 functions as the Proton acceptor in the catalytic mechanism. Arg298, His330, and Ser382 together coordinate substrate.

This sequence belongs to the RuBisCO large chain family. Type I subfamily. As to quaternary structure, heterohexadecamer of 8 large chains and 8 small chains. It depends on Mg(2+) as a cofactor.

The protein resides in the plastid. Its subcellular location is the chloroplast. It carries out the reaction 2 (2R)-3-phosphoglycerate + 2 H(+) = D-ribulose 1,5-bisphosphate + CO2 + H2O. The enzyme catalyses D-ribulose 1,5-bisphosphate + O2 = 2-phosphoglycolate + (2R)-3-phosphoglycerate + 2 H(+). In terms of biological role, ruBisCO catalyzes two reactions: the carboxylation of D-ribulose 1,5-bisphosphate, the primary event in carbon dioxide fixation, as well as the oxidative fragmentation of the pentose substrate in the photorespiration process. Both reactions occur simultaneously and in competition at the same active site. This Pyropia dentata (Red alga) protein is Ribulose bisphosphate carboxylase large chain (rbcL).